Here is a 370-residue protein sequence, read N- to C-terminus: Protein maelstrom 2 (370 aa).

The HMG box DNA-binding region spans 2–68 (AQNKPNAFMA…VLERESKTER (67 aa)).

This sequence belongs to the maelstrom family.

The protein resides in the cytoplasm. It is found in the nucleus. Its function is as follows. Involved both in the piRNA and miRNA metabolic processes. As a component of the meiotic nuage, plays a central role during oogenesis by repressing transposable elements and preventing their mobilization, which is essential for the germline integrity. Repression of transposable elements is mediated via the piRNA metabolic process, which mediates the repression of transposable elements during meiosis by forming complexes composed of piRNAs and Piwi proteins and governs the repression of transposons. As a nuclear component, it is required for proper differentiation in the germline stem cell (GSC) lineage by repressing microRNA-7 (miR-7), thereby acting as an indirect regulator of bag-of-marbles (Bam). Acts by binding to the promoter of miR-7 gene and repressing its expression; miR-7 repression alleviates the Bam repression by miR-7, thereby allowing differentiation in the germline stem cell (GSC) lineage. The polypeptide is Protein maelstrom 2 (mael2) (Drosophila pseudoobscura pseudoobscura (Fruit fly)).